A 104-amino-acid polypeptide reads, in one-letter code: L-rhamnose mutarotase (104 aa).

Substrate is bound at residue tyrosine 18. Histidine 22 acts as the Proton donor in catalysis. Residues tyrosine 41 and 76 to 77 each bind substrate; that span reads WW.

Belongs to the rhamnose mutarotase family. As to quaternary structure, homodimer.

The protein resides in the cytoplasm. The catalysed reaction is alpha-L-rhamnose = beta-L-rhamnose. It functions in the pathway carbohydrate metabolism; L-rhamnose metabolism. Functionally, involved in the anomeric conversion of L-rhamnose. This is L-rhamnose mutarotase from Escherichia coli O7:K1 (strain IAI39 / ExPEC).